Here is a 303-residue protein sequence, read N- to C-terminus: UDP-N-acetylenolpyruvoylglucosamine reductase (303 aa).

The FAD-binding PCMH-type domain maps to 29–196 (KIGGPADVLV…LEAVLQLEQK (168 aa)). R174 is a catalytic residue. Residue S225 is the Proton donor of the active site. Residue E295 is part of the active site.

It belongs to the MurB family. FAD is required as a cofactor.

The protein localises to the cytoplasm. It carries out the reaction UDP-N-acetyl-alpha-D-muramate + NADP(+) = UDP-N-acetyl-3-O-(1-carboxyvinyl)-alpha-D-glucosamine + NADPH + H(+). It functions in the pathway cell wall biogenesis; peptidoglycan biosynthesis. Functionally, cell wall formation. This chain is UDP-N-acetylenolpyruvoylglucosamine reductase, found in Bacillus licheniformis (strain ATCC 14580 / DSM 13 / JCM 2505 / CCUG 7422 / NBRC 12200 / NCIMB 9375 / NCTC 10341 / NRRL NRS-1264 / Gibson 46).